Consider the following 180-residue polypeptide: ATP synthase subunit delta (180 aa).

It belongs to the ATPase delta chain family. F-type ATPases have 2 components, F(1) - the catalytic core - and F(0) - the membrane proton channel. F(1) has five subunits: alpha(3), beta(3), gamma(1), delta(1), epsilon(1). F(0) has three main subunits: a(1), b(2) and c(10-14). The alpha and beta chains form an alternating ring which encloses part of the gamma chain. F(1) is attached to F(0) by a central stalk formed by the gamma and epsilon chains, while a peripheral stalk is formed by the delta and b chains.

It is found in the cell inner membrane. In terms of biological role, f(1)F(0) ATP synthase produces ATP from ADP in the presence of a proton or sodium gradient. F-type ATPases consist of two structural domains, F(1) containing the extramembraneous catalytic core and F(0) containing the membrane proton channel, linked together by a central stalk and a peripheral stalk. During catalysis, ATP synthesis in the catalytic domain of F(1) is coupled via a rotary mechanism of the central stalk subunits to proton translocation. This protein is part of the stalk that links CF(0) to CF(1). It either transmits conformational changes from CF(0) to CF(1) or is implicated in proton conduction. This chain is ATP synthase subunit delta, found in Geobacter metallireducens (strain ATCC 53774 / DSM 7210 / GS-15).